The sequence spans 1367 residues: DNA polymerase III PolC-type (1367 aa).

An Exonuclease domain is found at Phe-358 to Phe-513.

The protein belongs to the DNA polymerase type-C family. PolC subfamily.

It localises to the cytoplasm. It carries out the reaction DNA(n) + a 2'-deoxyribonucleoside 5'-triphosphate = DNA(n+1) + diphosphate. Required for replicative DNA synthesis. This DNA polymerase also exhibits 3' to 5' exonuclease activity. The sequence is that of DNA polymerase III PolC-type from Thermotoga petrophila (strain ATCC BAA-488 / DSM 13995 / JCM 10881 / RKU-1).